The primary structure comprises 121 residues: Small ribosomal subunit protein uS13 (121 aa).

A disordered region spans residues R92–K121.

The protein belongs to the universal ribosomal protein uS13 family. Part of the 30S ribosomal subunit. Forms a loose heterodimer with protein S19. Forms two bridges to the 50S subunit in the 70S ribosome.

Located at the top of the head of the 30S subunit, it contacts several helices of the 16S rRNA. In the 70S ribosome it contacts the 23S rRNA (bridge B1a) and protein L5 of the 50S subunit (bridge B1b), connecting the 2 subunits; these bridges are implicated in subunit movement. Contacts the tRNAs in the A and P-sites. In Polynucleobacter asymbioticus (strain DSM 18221 / CIP 109841 / QLW-P1DMWA-1) (Polynucleobacter necessarius subsp. asymbioticus), this protein is Small ribosomal subunit protein uS13.